The following is a 199-amino-acid chain: Recombination protein RecR (199 aa).

The C4-type zinc-finger motif lies at C56–C71. A Toprim domain is found at Q79 to P173.

The protein belongs to the RecR family.

In terms of biological role, may play a role in DNA repair. It seems to be involved in an RecBC-independent recombinational process of DNA repair. It may act with RecF and RecO. This is Recombination protein RecR from Gloeothece citriformis (strain PCC 7424) (Cyanothece sp. (strain PCC 7424)).